The primary structure comprises 709 residues: Elongation factor G (709 aa).

Residues 9–292 form the tr-type G domain; sequence AYYRNIGISA…AVVEYLPSPT (284 aa). GTP-binding positions include 18-25, 89-93, and 143-146; these read AHIDAGKT, DTPGH, and NKMD.

This sequence belongs to the TRAFAC class translation factor GTPase superfamily. Classic translation factor GTPase family. EF-G/EF-2 subfamily.

The protein localises to the cytoplasm. Functionally, catalyzes the GTP-dependent ribosomal translocation step during translation elongation. During this step, the ribosome changes from the pre-translocational (PRE) to the post-translocational (POST) state as the newly formed A-site-bound peptidyl-tRNA and P-site-bound deacylated tRNA move to the P and E sites, respectively. Catalyzes the coordinated movement of the two tRNA molecules, the mRNA and conformational changes in the ribosome. The chain is Elongation factor G from Blochmanniella floridana.